Consider the following 218-residue polypeptide: Large ribosomal subunit protein bL25 (218 aa).

The segment at 187-218 (SATAAVEEAKEDGAPEESAQGQGAAEAQETGK) is disordered. The span at 202 to 218 (EESAQGQGAAEAQETGK) shows a compositional bias: low complexity.

This sequence belongs to the bacterial ribosomal protein bL25 family. CTC subfamily. Part of the 50S ribosomal subunit; part of the 5S rRNA/L5/L18/L25 subcomplex. Contacts the 5S rRNA. Binds to the 5S rRNA independently of L5 and L18.

Its function is as follows. This is one of the proteins that binds to the 5S RNA in the ribosome where it forms part of the central protuberance. This chain is Large ribosomal subunit protein bL25, found in Anaplasma marginale (strain Florida).